We begin with the raw amino-acid sequence, 362 residues long: 2-aminoethylphosphonate--pyruvate transaminase (362 aa).

Lys-193 carries the N6-(pyridoxal phosphate)lysine modification.

This sequence belongs to the class-V pyridoxal-phosphate-dependent aminotransferase family. PhnW subfamily. Homodimer. Pyridoxal 5'-phosphate serves as cofactor.

It carries out the reaction (2-aminoethyl)phosphonate + pyruvate = phosphonoacetaldehyde + L-alanine. Functionally, involved in phosphonate degradation. This is 2-aminoethylphosphonate--pyruvate transaminase from Bacteroides fragilis (strain YCH46).